Reading from the N-terminus, the 369-residue chain is MYKLAVCTLLILSVTAIDVTNSVWTSHDQKAFAQIKQSGWGNFILNFGELHLQTGGILAELNTEIAKLIDELDEELAEVHHQYARRTDVHNREVSRLEQEIQDKEREVFNAHDFYDNVLIPQRDRFAAQLEQLQENIAQNRRTLNEATVQRANDHAEFESQVAEHNEAISAIDESLQLLSQLESPSLVQIQKVQKNLTKIQQSLKRHSTFQTFIKTLLEIAVEANFADQGALREILTAFNNLRVQLVDSLNQLTADEAEAQKDFEARVIQLNQEHAEFQRAVVVKTAEIEANANKIEQTLDLIDVLHADLDTLNGQLQAENDDYAFATDVYNATVSEYNKELNAAHQALDLLNQPRFTDYVKSQLKGAF.

The signal sequence occupies residues 1-16; sequence MYKLAVCTLLILSVTA. The propeptide occupies 17-55; the sequence is IDVTNSVWTSHDQKAFAQIKQSGWGNFILNFGELHLQTG. Residues 56 to 180 adopt a coiled-coil conformation; sequence GILAELNTEI…AIDESLQLLS (125 aa). A propeptide spanning residues 190–225 is cleaved from the precursor; that stretch reads IQKVQKNLTKIQQSLKRHSTFQTFIKTLLEIAVEAN. Residues 262–354 are a coiled coil; that stretch reads KDFEARVIQL…AHQALDLLNQ (93 aa).

This sequence belongs to the TMP family. Post-translationally, two components are produced by post-translational processing from the precursor peptide.

It localises to the trichocyst. In terms of biological role, structural protein that crystallize inside the trichocyst matrix. The protein is Trichocyst matrix protein T1-B (T1B) of Paramecium tetraurelia.